The sequence spans 305 residues: N-acetylneuraminate lyase 2 (305 aa).

Ser-47 and Thr-48 together coordinate aceneuramate. Tyr-137 (proton donor) is an active-site residue. Catalysis depends on Lys-165, which acts as the Schiff-base intermediate with substrate. Aceneuramate contacts are provided by Thr-167, Gly-189, Asp-191, Glu-192, and Ser-208.

Belongs to the DapA family. NanA subfamily. Homotetramer.

The protein localises to the cytoplasm. It carries out the reaction aceneuramate = aldehydo-N-acetyl-D-mannosamine + pyruvate. It participates in amino-sugar metabolism; N-acetylneuraminate degradation; D-fructose 6-phosphate from N-acetylneuraminate: step 1/5. Functionally, catalyzes the reversible aldol cleavage of N-acetylneuraminic acid (sialic acid; Neu5Ac) to form pyruvate and N-acetylmannosamine (ManNAc) via a Schiff base intermediate. This is N-acetylneuraminate lyase 2 from Escherichia coli O6:H1 (strain CFT073 / ATCC 700928 / UPEC).